The following is a 292-amino-acid chain: tRNA dimethylallyltransferase (292 aa).

10-17 (GPTASGKS) is an ATP binding site. 12–17 (TASGKS) lines the substrate pocket. 2 interaction with substrate tRNA regions span residues 35 to 38 (DSMQ) and 159 to 163 (QRIVR).

The protein belongs to the IPP transferase family. In terms of assembly, monomer. It depends on Mg(2+) as a cofactor.

The catalysed reaction is adenosine(37) in tRNA + dimethylallyl diphosphate = N(6)-dimethylallyladenosine(37) in tRNA + diphosphate. Its function is as follows. Catalyzes the transfer of a dimethylallyl group onto the adenine at position 37 in tRNAs that read codons beginning with uridine, leading to the formation of N6-(dimethylallyl)adenosine (i(6)A). In Chelativorans sp. (strain BNC1), this protein is tRNA dimethylallyltransferase.